The sequence spans 535 residues: Succinate-semialdehyde dehydrogenase, mitochondrial (535 aa).

The N-terminal 47 residues, 1 to 47, are a transit peptide targeting the mitochondrion; the sequence is MATCIWLRSCGARRLGWTFPGCRLRPRAGGLVPASGPAPGPAQLRCY. The residue at position 126 (Lys126) is an N6-acetyllysine; alternate. Lys126 bears the N6-succinyllysine; alternate mark. Lys135 and Lys184 each carry N6-succinyllysine. Residues Arg213 and 228-231 contribute to the NAD(+) site; that span reads KPAE. Arg213 provides a ligand contact to substrate. An N6-acetyllysine; alternate modification is found at Lys265. Lys265 is modified (N6-succinyllysine; alternate). Residue 284–289 coordinates NAD(+); the sequence is GSTTTG. Glu306 functions as the Proton acceptor in the catalytic mechanism. Residue Arg334 coordinates substrate. Catalysis depends on Cys340, which acts as the Nucleophile. Cys340 and Cys342 form a disulfide bridge. At Lys365 the chain carries N6-acetyllysine. Lys402 bears the N6-succinyllysine mark. Lys411 carries the post-translational modification N6-acetyllysine. Ser498 provides a ligand contact to substrate. Residue Ser499 is modified to Phosphoserine.

Belongs to the aldehyde dehydrogenase family. Homotetramer.

Its subcellular location is the mitochondrion. It catalyses the reaction succinate semialdehyde + NAD(+) + H2O = succinate + NADH + 2 H(+). Its pathway is amino-acid degradation; 4-aminobutanoate degradation. Redox-regulated. Inhibited under oxydizing conditions. Its function is as follows. Catalyzes one step in the degradation of the inhibitory neurotransmitter gamma-aminobutyric acid (GABA). The protein is Succinate-semialdehyde dehydrogenase, mitochondrial (ALDH5A1) of Pan paniscus (Pygmy chimpanzee).